Reading from the N-terminus, the 242-residue chain is DNA repair protein RecO (242 aa).

Belongs to the RecO family. In terms of assembly, monomer.

Involved in DNA repair and RecF pathway recombination. The polypeptide is DNA repair protein RecO (Shigella flexneri).